We begin with the raw amino-acid sequence, 48 residues long: Glycine-rich RNA-binding protein 2 (48 aa).

The sequence is that of Glycine-rich RNA-binding protein 2 from Populus euphratica (Euphrates poplar).